A 95-amino-acid chain; its full sequence is Mitochondrial import inner membrane translocase subunit Tim13 (95 aa).

Residue M1 is modified to N-acetylmethionine. S7 carries the phosphoserine modification. The Twin CX3C motif motif lies at 46-69 (CFRKCIGKPGGSLDNSEQKCIAMC). 2 cysteine pairs are disulfide-bonded: C46–C69 and C50–C65. K53 is subject to N6-succinyllysine.

The protein belongs to the small Tim family. Heterohexamer; composed of 3 copies of TIMM8 (TIMM8A or TIMM8B) and 3 copies of TIMM13, named soluble 70 kDa complex. Associates with the TIM22 complex, whose core is composed of TIMM22. Ubiquitous, with highest expression in heart, kidney, liver and skeletal muscle.

It is found in the mitochondrion inner membrane. In terms of biological role, mitochondrial intermembrane chaperone that participates in the import and insertion of some multi-pass transmembrane proteins into the mitochondrial inner membrane. Also required for the transfer of beta-barrel precursors from the TOM complex to the sorting and assembly machinery (SAM complex) of the outer membrane. Acts as a chaperone-like protein that protects the hydrophobic precursors from aggregation and guide them through the mitochondrial intermembrane space. The TIMM8-TIMM13 complex mediates the import of proteins such as TIMM23, SLC25A12/ARALAR1 and SLC25A13/ARALAR2, while the predominant TIMM9-TIMM10 70 kDa complex mediates the import of much more proteins. This Homo sapiens (Human) protein is Mitochondrial import inner membrane translocase subunit Tim13 (TIMM13).